The primary structure comprises 399 residues: Probable protein phosphatase 2C 28 (399 aa).

Positions 48–356 constitute a PPM-type phosphatase domain; that stretch reads EFSMAVVQAN…DDITVIVVFL (309 aa). Aspartate 87, glycine 88, aspartate 288, and aspartate 347 together coordinate Mn(2+).

This sequence belongs to the PP2C family. Mg(2+) serves as cofactor. Mn(2+) is required as a cofactor.

It carries out the reaction O-phospho-L-seryl-[protein] + H2O = L-seryl-[protein] + phosphate. The catalysed reaction is O-phospho-L-threonyl-[protein] + H2O = L-threonyl-[protein] + phosphate. The sequence is that of Probable protein phosphatase 2C 28 from Oryza sativa subsp. japonica (Rice).